Reading from the N-terminus, the 182-residue chain is N-alpha-acetyltransferase daf-31 (182 aa).

Residues 1 to 152 (MNIRCARVDD…DAYAMRRDLA (152 aa)) form the N-acetyltransferase domain. The segment at 162–182 (PADREAYTTAKTTDDKKKNRS) is disordered.

The protein belongs to the acetyltransferase family. ARD1 subfamily. Component of the N-terminal acetyltransferase A (NatA) complex. Expressed in head and tail hypodermal cells, hypodermal seam cells, pharynx, intestine and head and tail neurons.

It catalyses the reaction N-terminal glycyl-[protein] + acetyl-CoA = N-terminal N(alpha)-acetylglycyl-[protein] + CoA + H(+). It carries out the reaction N-terminal L-alanyl-[protein] + acetyl-CoA = N-terminal N(alpha)-acetyl-L-alanyl-[protein] + CoA + H(+). The enzyme catalyses N-terminal L-seryl-[protein] + acetyl-CoA = N-terminal N(alpha)-acetyl-L-seryl-[protein] + CoA + H(+). The catalysed reaction is N-terminal L-valyl-[protein] + acetyl-CoA = N-terminal N(alpha)-acetyl-L-valyl-[protein] + CoA + H(+). It catalyses the reaction N-terminal L-cysteinyl-[protein] + acetyl-CoA = N-terminal N(alpha)-acetyl-L-cysteinyl-[protein] + CoA + H(+). It carries out the reaction N-terminal L-threonyl-[protein] + acetyl-CoA = N-terminal N(alpha)-acetyl-L-threonyl-[protein] + CoA + H(+). Its function is as follows. Catalytic subunit of the N-terminal acetyltransferase A (NatA) complex which displays alpha (N-terminal) acetyltransferase activity. Plays a role in regulating larval development, metabolism and longevity. Functions downstream or alongside daf-3, daf-12 and daf-16 in the dauer formation pathway. Functions upstream of daf-15 to enable animal development. This Caenorhabditis elegans protein is N-alpha-acetyltransferase daf-31.